The following is a 145-amino-acid chain: Ribonuclease P protein component (145 aa).

The disordered stretch occupies residues 121–145 (PAAAGTMPPARTVHPSSLSPTEPEL). Polar residues predominate over residues 134 to 145 (HPSSLSPTEPEL).

It belongs to the RnpA family. Consists of a catalytic RNA component (M1 or rnpB) and a protein subunit.

The enzyme catalyses Endonucleolytic cleavage of RNA, removing 5'-extranucleotides from tRNA precursor.. Its function is as follows. RNaseP catalyzes the removal of the 5'-leader sequence from pre-tRNA to produce the mature 5'-terminus. It can also cleave other RNA substrates such as 4.5S RNA. The protein component plays an auxiliary but essential role in vivo by binding to the 5'-leader sequence and broadening the substrate specificity of the ribozyme. The chain is Ribonuclease P protein component from Xanthomonas axonopodis pv. citri (strain 306).